Consider the following 535-residue polypeptide: SIR4-interacting protein SIF2 (535 aa).

The 33-residue stretch at 4-36 (TSEELNYLIWRYCQEMGHEVSALALQDETRVLE) folds into the LisH domain. The disordered stretch occupies residues 104-140 (EGRFTLETNSESNKAGEDGASTVERETQEDDTNSIDS). Residues 130-140 (TQEDDTNSIDS) show a composition bias toward acidic residues. At serine 137 the chain carries Phosphoserine. 8 WD repeats span residues 155 to 186 (VKLDNIVSSTWNPLDESILAYGEKNSVARLAR), 218 to 248 (KTTNQVTCLAWSHDGNSIVTGVENGELRLWN), 259 to 289 (FHRAPIVSVKWNKDGTHIISMDVENVTILWN), 316 to 345 (GDGSLGVDVEWVDDDKFVIPGPKGAIFVYQ), 357 to 387 (GHHGPISVLEFNDTNKLLLSASDDGTLRIWH), 399 to 428 (GHSQSIVSASWVGDDKVISCSMDGSVRLWS), 440 to 470 (VDGVPIFAGRISQDGQKYAVAFMDGQVNVYD), and 503 to 534 (SQDNDYIFDLSWNCAGNKISVAYSLQEGSVVA).

Homotetramer. Interacts with SIR4 N-terminal domain. Interacts with a complex composed of SIN3 and RPD3. Identified in the Set3C complex with HOS2, HST1, SNT1, CPR1, HOS4/YIL112W and SET3.

The protein resides in the nucleus. In terms of biological role, antagonizes telomeric silencing in yeast. May recruit SIR4 to non-telomeric sites or repression. This chain is SIR4-interacting protein SIF2 (SIF2), found in Saccharomyces cerevisiae (strain ATCC 204508 / S288c) (Baker's yeast).